A 409-amino-acid chain; its full sequence is Tyrosine--tRNA ligase (409 aa).

A 'HIGH' region motif is present at residues 54 to 63 (PTAPDIHLGH). The short motif at 238-242 (KMSKS) is the 'KMSKS' region element. Lysine 241 contacts ATP. Residues 347-407 (QGILRILREA…GKRKFARVKL (61 aa)) form the S4 RNA-binding domain.

The protein belongs to the class-I aminoacyl-tRNA synthetase family. TyrS type 2 subfamily. As to quaternary structure, homodimer.

The protein localises to the cytoplasm. It catalyses the reaction tRNA(Tyr) + L-tyrosine + ATP = L-tyrosyl-tRNA(Tyr) + AMP + diphosphate + H(+). Functionally, catalyzes the attachment of tyrosine to tRNA(Tyr) in a two-step reaction: tyrosine is first activated by ATP to form Tyr-AMP and then transferred to the acceptor end of tRNA(Tyr). In Bordetella bronchiseptica (strain ATCC BAA-588 / NCTC 13252 / RB50) (Alcaligenes bronchisepticus), this protein is Tyrosine--tRNA ligase.